We begin with the raw amino-acid sequence, 559 residues long: Neutral amino acid transporter 9 (559 aa).

Residues 1–118 (MANVDSDSRH…YTEGYRKNTS (118 aa)) lie on the Cytoplasmic side of the membrane. A helical transmembrane segment spans residues 119–139 (LVTIFMIWNTMMGTSILSIPW). Residues 128-133 (TMMGTS) are important for arginine binding and amino acid transport. Position 133 (Ser-133) interacts with arginine. The Lumenal segment spans residues 140–145 (GIKQAG). A helical transmembrane segment spans residues 146-166 (FTTGMCVIVLMGLLTLYCCYR). Over 167-197 (VVKSRSMIVTSDTTTWEYPDVCKHYFGSFGQ) the chain is Cytoplasmic. A helical transmembrane segment spans residues 198 to 224 (WSSLLFSLVSLIGAMIVYWVLMSNFLF). Topologically, residues 225–281 (NTGKFIFNFIHHINDTDTVLSTNNSSPVICPSAGSGHPDNSSMIFYNSDTEVRLFER) are lumenal. 3 N-linked (GlcNAc...) asparagine glycosylation sites follow: Asn-238, Asn-247, and Asn-264. The cysteines at positions 254 and 422 are disulfide-linked. The helical transmembrane segment at 282 to 298 (WWDKSKTVPFYLIGLLL) threads the bilayer. Over 299-307 (PLLNFKSPS) the chain is Cytoplasmic. Residues 308–332 (FFSKFNILGTVSVLYLIFIVTLKAI) traverse the membrane as a helical segment. Residues 333 to 354 (RLGFHLEFHWFAPTEFFVPEIR) lie on the Lumenal side of the membrane. The helical transmembrane segment at 355-375 (AQFPQLTGVLTLAFFIHNCII) threads the bilayer. Residues 376–392 (TLLKNNKNQENNVRDLC) lie on the Cytoplasmic side of the membrane. Residues 393–413 (IAYMLVTLTYLYIGVLVFASF) traverse the membrane as a helical segment. Over 414 to 435 (PSPPLPKDCIEQNFLDNFPSSD) the chain is Lumenal. The helical transmembrane segment at 436–456 (TLSFIARICLLFQMMTVYPLL) threads the bilayer. Residues 442–452 (RICLLFQMMTV) carry the CARC motif motif. A CRAC motif motif is present at residues 455–461 (LLGYLAR). Residues 457-477 (GYLARVQLLGHIFGDIYPSIF) are Cytoplasmic-facing. The helical transmembrane segment at 478-498 (HVLILNLIIVGAGVTMACFYP) threads the bilayer. The Lumenal segment spans residues 499–505 (NIGGIIR). The chain crosses the membrane as a helical span at residues 506-526 (YSGAACGLAFVFIYPSLIYIL). At 527–538 (SQHQEERLTWPK) the chain is on the cytoplasmic side. A helical membrane pass occupies residues 539 to 559 (LVFHIIIIILGLANLIAQFFM).

This sequence belongs to the amino acid/polyamine transporter 2 family. SLC38A9 subfamily. In terms of assembly, associated component of the Ragulator complex (composed of LAMTOR1, LAMTOR2, LAMTOR3, LAMTOR4 and LAMTOR5). Associated component of the Rag GTPases heterodimers (composed of RRAGA, RRAGB, RRAGC and RRAGD); this interaction is independent of the Ragulator complex but depends on the nucleotide loading state of the Rag GTPase heterodimer. Interacts with TM4SF5. Interacts with NPC1; this interaction inhibits cholesterol-mediated mTORC1 activation via its sterol transport activity. Glycosylated.

The protein resides in the lysosome membrane. Its subcellular location is the late endosome membrane. It catalyses the reaction L-leucine(in) = L-leucine(out). The catalysed reaction is L-tyrosine(in) = L-tyrosine(out). The enzyme catalyses L-glutamine(out) = L-glutamine(in). It carries out the reaction L-asparagine(out) = L-asparagine(in). In terms of biological role, lysosomal amino acid transporter involved in the activation of mTORC1 in response to amino acid levels. Probably acts as an amino acid sensor of the Rag GTPases and Ragulator complexes, 2 complexes involved in amino acid sensing and activation of mTORC1, a signaling complex promoting cell growth in response to growth factors, energy levels, and amino acids. Following activation by amino acids, the Ragulator and Rag GTPases function as a scaffold recruiting mTORC1 to lysosomes where it is in turn activated. SLC38A9 mediates transport of amino acids with low capacity and specificity with a slight preference for polar amino acids. Acts as an arginine sensor. Following activation by arginine binding, mediates transport of L-glutamine, leucine and tyrosine with high efficiency, and is required for the efficient utilization of these amino acids after lysosomal protein degradation. However, the transport mechanism is not well defined and the role of sodium is not clear. Can disassemble the lysosomal folliculin complex (LFC), and thereby triggers GAP activity of FLCN:FNIP2 toward RRAGC. Acts as an cholesterol sensor that conveys increases in lysosomal cholesterol, leading to lysosomal recruitment and activation of mTORC1 via the Rag GTPases. Guanine exchange factor (GEF) that, upon arginine binding, stimulates GDP release from RRAGA and therefore activates the Rag GTPase heterodimer and the mTORC1 pathway in response to nutrient sufficiency. The protein is Neutral amino acid transporter 9 of Rattus norvegicus (Rat).